A 486-amino-acid polypeptide reads, in one-letter code: Glutamyl-tRNA(Gln) amidotransferase subunit A (486 aa).

Residues K77 and S152 each act as charge relay system in the active site. S176 serves as the catalytic Acyl-ester intermediate.

It belongs to the amidase family. GatA subfamily. As to quaternary structure, heterotrimer of A, B and C subunits.

It catalyses the reaction L-glutamyl-tRNA(Gln) + L-glutamine + ATP + H2O = L-glutaminyl-tRNA(Gln) + L-glutamate + ADP + phosphate + H(+). In terms of biological role, allows the formation of correctly charged Gln-tRNA(Gln) through the transamidation of misacylated Glu-tRNA(Gln) in organisms which lack glutaminyl-tRNA synthetase. The reaction takes place in the presence of glutamine and ATP through an activated gamma-phospho-Glu-tRNA(Gln). The protein is Glutamyl-tRNA(Gln) amidotransferase subunit A of Lactococcus lactis subsp. cremoris (strain SK11).